Consider the following 489-residue polypeptide: Carboxyl-terminal-processing peptidase 1, chloroplastic (489 aa).

Low complexity predominate over residues 1-20 (MRLLLPFSSPLSATSSPSTP). A disordered region spans residues 1–27 (MRLLLPFSSPLSATSSPSTPQFIPELP). The PDZ domain maps to 189–273 (FSRMSKYDIT…TFVVLKVKHG (85 aa)). Residues serine 403 and lysine 428 each act as charge relay system in the active site.

The protein belongs to the peptidase S41A family.

It localises to the plastid. Its subcellular location is the chloroplast thylakoid lumen. It carries out the reaction The enzyme shows specific recognition of a C-terminal tripeptide, Xaa-Yaa-Zaa, in which Xaa is preferably Ala or Leu, Yaa is preferably Ala or Tyr, and Zaa is preferably Ala, but then cleaves at a variable distance from the C-terminus. A typical cleavage is -Ala-Ala-|-Arg-Ala-Ala-Lys-Glu-Asn-Tyr-Ala-Leu-Ala-Ala.. Protease involved in the C-terminal processing of the chloroplastic D1 protein of photosystem II. This proteolytic processing is necessary to allow the light-driven assembly of the tetranuclear manganese cluster, which is responsible for photosynthetic water oxidation. This is Carboxyl-terminal-processing peptidase 1, chloroplastic (CTPA1) from Arabidopsis thaliana (Mouse-ear cress).